The sequence spans 151 residues: Deoxyuridine 5'-triphosphate nucleotidohydrolase (151 aa).

Residues Arg-70–Gly-72, Asn-83, Leu-87–Asp-89, and Met-97 contribute to the substrate site.

Belongs to the dUTPase family. Homotrimer. Mg(2+) serves as cofactor.

It catalyses the reaction dUTP + H2O = dUMP + diphosphate + H(+). It participates in pyrimidine metabolism; dUMP biosynthesis; dUMP from dCTP (dUTP route): step 2/2. In terms of biological role, this enzyme is involved in nucleotide metabolism: it produces dUMP, the immediate precursor of thymidine nucleotides and it decreases the intracellular concentration of dUTP so that uracil cannot be incorporated into DNA. The protein is Deoxyuridine 5'-triphosphate nucleotidohydrolase of Escherichia fergusonii (strain ATCC 35469 / DSM 13698 / CCUG 18766 / IAM 14443 / JCM 21226 / LMG 7866 / NBRC 102419 / NCTC 12128 / CDC 0568-73).